A 106-amino-acid polypeptide reads, in one-letter code: ATP-dependent Clp protease adapter protein ClpS (106 aa).

It belongs to the ClpS family. Binds to the N-terminal domain of the chaperone ClpA.

Its function is as follows. Involved in the modulation of the specificity of the ClpAP-mediated ATP-dependent protein degradation. The protein is ATP-dependent Clp protease adapter protein ClpS of Salmonella agona (strain SL483).